Reading from the N-terminus, the 115-residue chain is Ribosomal protein uS4-like (115 aa).

This sequence belongs to the universal ribosomal protein uS4 family.

The sequence is that of Ribosomal protein uS4-like from Azoarcus sp. (strain BH72).